The following is a 60-amino-acid chain: Large ribosomal subunit protein uL30 (60 aa).

Belongs to the universal ribosomal protein uL30 family. As to quaternary structure, part of the 50S ribosomal subunit.

The polypeptide is Large ribosomal subunit protein uL30 (Shewanella sp. (strain ANA-3)).